Consider the following 110-residue polypeptide: Neural hemoglobin (110 aa).

Residues 2 to 110 enclose the Globin domain; the sequence is VNWAAVVDDF…HAIDDILSHL (109 aa). His-70 is a binding site for heme.

It belongs to the globin family. In terms of assembly, homotetramer. Self-associates in the deoxy state. Seems to dissociate upon oxygenation.

Acts as an oxygen store capable of sustaining neuronal activity in an anoxic environment for 5 to 30 minutes. The protein is Neural hemoglobin of Cerebratulus lacteus (Milky ribbon worm).